Consider the following 87-residue polypeptide: Cobalt transport protein CbiN (87 aa).

2 consecutive transmembrane segments (helical) span residues 4-24 and 58-78; these read LLLL…EWAG and MLFS…LGYY.

It belongs to the CbiN family. In terms of assembly, forms an energy-coupling factor (ECF) transporter complex composed of an ATP-binding protein (A component, CbiO), a transmembrane protein (T component, CbiQ) and 2 possible substrate-capture proteins (S components, CbiM and CbiN) of unknown stoichimetry.

It is found in the cell membrane. It participates in cofactor biosynthesis; adenosylcobalamin biosynthesis. Part of the energy-coupling factor (ECF) transporter complex CbiMNOQ involved in cobalt import. This is Cobalt transport protein CbiN from Archaeoglobus fulgidus (strain ATCC 49558 / DSM 4304 / JCM 9628 / NBRC 100126 / VC-16).